Reading from the N-terminus, the 1120-residue chain is MEANDSPHDVAVVGMGCRLPGNNNTPEELWRSILQKVDASSEIPRMRWEPYQQNAQNARSIGKVPRRGYFVKNLENFDAGFFNISPKEAEQMDPQQRLVLEVTWEALENAGIPLSSLSGSDAAVFMGVNSDDYGKLLLEDLPHVEPWMGIGTAYCGVANRISYHLNLMGPSTAVDAACASSLVAIHLGRQAILSGESKVAIVGGVNAIFGPGLTSVLDKAGALSSDGRCHSFDDAASGYGRGEGAAVVILKNMAEAVKDGDHILATLKGTAVAQDGRTNGIMAPNQKAQELVARKALDVARVDASTIDYVEAHATSTPVGDPTEVSAISAVYGKGRSPDKPCYIGSVKPNVGHLEAGAGAVGFIKAVMSVQKGILPPQANLKTLNTRVNWSEGVQVVQDIEDWPSSGYPRRAGVCSYGYGGTVSHAIIEKYIQTGPAIYSKEQWPKGTQVLLLSSPQRRSLETQAATQAEWMSTVGKQNDLRCVAATLGTRRSHHKYRAAFVVESHDDAAEKLNAFACQTPTKWTTSGGKPEGDDRPVVWVFSGHGAQWTDMAKDLLQYRVFRDVIESVDILVQKEMGFSAIQAMEMGVLNGSDQVQVLTYLMQIGLSEVLRSLGVSCGAVIGHSVGEIAASVAAGCITPAEGTLIVTRRAKLYRRFMGAGGMALVCAPLEQITIEISTQNVNNLVVAINSSPSSCVVSGPKEEIEAFALNLNNKGIKTIHVDTDIAFHHPMLGELMEPLAEALVGYVSPSQSKVAIYSTSASDPRSTMDRGIRYWLDNMVNPVQLTSAISAAAEDASPLAPIIKKILSMESRGATIQAIAIDISSHDAASQLSSRIDDLCFPPIRGVVHAAGVLHNEHVLSVTPDSFERVLAPKIAGSLTLNMLFPPKTVDFMVLFSSCGQFFGFPGQASYASGNAFLDALATYRRSQGDNTIAMQWTSWREIGMAAGSEFVRAELATKGITDISQEEAFQAWMHVSKYDVDHAVVLRSRALEKHEPLPSPLLVDIAIHKISSILTPPPTPPLSASSDLLPLPRNPADRFDSLSRQVRECVANVLQMETDEVASQEPLSNMGMDSVMTVHLRGRLQKSLGVLVPPNLTWSHPSIDHIVKWLMEKTNDKE.

In terms of domain architecture, Ketosynthase family 3 (KS3) spans 7 to 430 (PHDVAVVGMG…GTVSHAIIEK (424 aa)). Active-site for beta-ketoacyl synthase activity residues include Cys178, His313, and His353. The interval 539–796 (VWVFSGHGAQ…TSAISAAAED (258 aa)) is malonyl-CoA:ACP transacylase (MAT) domain. Catalysis depends on Ser625, which acts as the For acyl/malonyl transferase activity. The tract at residues 804–943 (IKKILSMESR…IAMQWTSWRE (140 aa)) is ketoreductase (KR) domain. Residues 1042-1116 (DSLSRQVREC…HIVKWLMEKT (75 aa)) enclose the Carrier domain. At Ser1076 the chain carries O-(pantetheine 4'-phosphoryl)serine.

Functionally, polyketide synthase; part of the gene cluster 41 that mediates the biosynthesis of an extracellular and diffusible metabolite that is able to stimulate colony sclerotial production. The sequence is that of Cluster 41 polyketide synthase from Aspergillus flavus (strain ATCC 200026 / FGSC A1120 / IAM 13836 / NRRL 3357 / JCM 12722 / SRRC 167).